Reading from the N-terminus, the 349-residue chain is UDP-N-acetylenolpyruvoylglucosamine reductase (349 aa).

An FAD-binding PCMH-type domain is found at 25-197 (GIDARARYAA…VSVTFRLPKR (173 aa)). Residue Arg-173 is part of the active site. Ser-249 (proton donor) is an active-site residue. Glu-345 is an active-site residue.

This sequence belongs to the MurB family. The cofactor is FAD.

The protein resides in the cytoplasm. It carries out the reaction UDP-N-acetyl-alpha-D-muramate + NADP(+) = UDP-N-acetyl-3-O-(1-carboxyvinyl)-alpha-D-glucosamine + NADPH + H(+). It functions in the pathway cell wall biogenesis; peptidoglycan biosynthesis. Functionally, cell wall formation. The chain is UDP-N-acetylenolpyruvoylglucosamine reductase from Burkholderia multivorans (strain ATCC 17616 / 249).